The following is a 303-amino-acid chain: Phytochrome-associated serine/threonine-protein phosphatase (303 aa).

The Zn(2+) site is built by D50, H52, D78, and N110. The Proton donor role is filled by H111. Positions 160 and 234 each coordinate Zn(2+).

This sequence belongs to the PPP phosphatase family. PP-6 (PP-V) subfamily. Interacts with PHYA and PHYB, mostly when they are phosphorylated and in Pfr forms. Zn(2+) is required as a cofactor. Mostly expressed in flowers and stems.

Its subcellular location is the cytoplasm. The enzyme catalyses O-phospho-L-seryl-[protein] + H2O = L-seryl-[protein] + phosphate. It carries out the reaction O-phospho-L-threonyl-[protein] + H2O = L-threonyl-[protein] + phosphate. Catalytic subunit of protein phosphatase 6 (PP6). Dephosphorylates phosphorylated phytochromes, with a preference toward Pfr forms. Plays a major role in the photoperiodic control of flowering time in long days by modulating phytochrome signals in flowering time control. This is Phytochrome-associated serine/threonine-protein phosphatase from Pisum sativum (Garden pea).